We begin with the raw amino-acid sequence, 246 residues long: NAD-dependent protein deacylase (246 aa).

Residues 1 to 237 (MSLPYRHVVI…PRLVEEILAA (237 aa)) form the Deacetylase sirtuin-type domain. 13 to 32 (GAGISAESGIQTFRAQDGLW) serves as a coordination point for NAD(+). Substrate is bound by residues Tyr57 and Arg60. Position 94–97 (94–97 (QNID)) interacts with NAD(+). The active-site Proton acceptor is His112. The Zn(2+) site is built by Cys120 and Cys139. Residues 179 to 181 (GTS), 205 to 207 (NLE), and Ala223 contribute to the NAD(+) site.

It belongs to the sirtuin family. Class III subfamily. Requires Zn(2+) as cofactor.

The protein resides in the cytoplasm. The enzyme catalyses N(6)-acetyl-L-lysyl-[protein] + NAD(+) + H2O = 2''-O-acetyl-ADP-D-ribose + nicotinamide + L-lysyl-[protein]. It catalyses the reaction N(6)-succinyl-L-lysyl-[protein] + NAD(+) + H2O = 2''-O-succinyl-ADP-D-ribose + nicotinamide + L-lysyl-[protein]. In terms of biological role, NAD-dependent lysine deacetylase and desuccinylase that specifically removes acetyl and succinyl groups on target proteins. Modulates the activities of several proteins which are inactive in their acylated form. The protein is NAD-dependent protein deacylase of Vibrio cholerae serotype O1 (strain ATCC 39315 / El Tor Inaba N16961).